We begin with the raw amino-acid sequence, 227 residues long: 7-cyano-7-deazaguanine synthase (227 aa).

An ATP-binding site is contributed by 8-18 (FSGGQDSTTCL). Zn(2+) is bound by residues Cys-187, Cys-196, Cys-199, and Cys-202.

This sequence belongs to the QueC family. It depends on Zn(2+) as a cofactor.

The enzyme catalyses 7-carboxy-7-deazaguanine + NH4(+) + ATP = 7-cyano-7-deazaguanine + ADP + phosphate + H2O + H(+). It functions in the pathway purine metabolism; 7-cyano-7-deazaguanine biosynthesis. In terms of biological role, catalyzes the ATP-dependent conversion of 7-carboxy-7-deazaguanine (CDG) to 7-cyano-7-deazaguanine (preQ(0)). This chain is 7-cyano-7-deazaguanine synthase, found in Aliivibrio fischeri (strain ATCC 700601 / ES114) (Vibrio fischeri).